A 1342-amino-acid chain; its full sequence is DNA-directed RNA polymerase subunit beta (1342 aa).

The protein belongs to the RNA polymerase beta chain family. As to quaternary structure, the RNAP catalytic core consists of 2 alpha, 1 beta, 1 beta' and 1 omega subunit. When a sigma factor is associated with the core the holoenzyme is formed, which can initiate transcription.

The catalysed reaction is RNA(n) + a ribonucleoside 5'-triphosphate = RNA(n+1) + diphosphate. In terms of biological role, DNA-dependent RNA polymerase catalyzes the transcription of DNA into RNA using the four ribonucleoside triphosphates as substrates. The protein is DNA-directed RNA polymerase subunit beta of Actinobacillus pleuropneumoniae serotype 3 (strain JL03).